The following is a 247-amino-acid chain: Probable transcriptional regulatory protein BT_0627 (247 aa).

The protein belongs to the TACO1 family.

The protein resides in the cytoplasm. The chain is Probable transcriptional regulatory protein BT_0627 from Bacteroides thetaiotaomicron (strain ATCC 29148 / DSM 2079 / JCM 5827 / CCUG 10774 / NCTC 10582 / VPI-5482 / E50).